Here is a 632-residue protein sequence, read N- to C-terminus: DNA topoisomerase 4 subunit B (632 aa).

ATP contacts are provided by residues Tyr5, Asn42, Asp69, 110–116 (GLHGVGI), and Lys334. Residues 412-525 (TELFLVEGDS…DGHVYVAMPP (114 aa)) form the Toprim domain. Mg(2+) is bound by residues Glu418, Asp490, and Asp492.

Belongs to the type II topoisomerase family. ParE type 1 subfamily. As to quaternary structure, heterotetramer composed of ParC and ParE. It depends on Mg(2+) as a cofactor. Requires Mn(2+) as cofactor. Ca(2+) serves as cofactor.

It catalyses the reaction ATP-dependent breakage, passage and rejoining of double-stranded DNA.. Its function is as follows. Topoisomerase IV is essential for chromosome segregation. It relaxes supercoiled DNA. Performs the decatenation events required during the replication of a circular DNA molecule. The sequence is that of DNA topoisomerase 4 subunit B from Haemophilus influenzae (strain ATCC 51907 / DSM 11121 / KW20 / Rd).